Consider the following 190-residue polypeptide: Pyridoxal 5'-phosphate synthase subunit PdxT (190 aa).

46 to 48 (GES) provides a ligand contact to L-glutamine. Catalysis depends on cysteine 78, which acts as the Nucleophile. Residues arginine 105 and 138–139 (IR) contribute to the L-glutamine site. Active-site charge relay system residues include histidine 174 and glutamate 176.

This sequence belongs to the glutaminase PdxT/SNO family. In the presence of PdxS, forms a dodecamer of heterodimers. Only shows activity in the heterodimer.

It catalyses the reaction aldehydo-D-ribose 5-phosphate + D-glyceraldehyde 3-phosphate + L-glutamine = pyridoxal 5'-phosphate + L-glutamate + phosphate + 3 H2O + H(+). The enzyme catalyses L-glutamine + H2O = L-glutamate + NH4(+). It functions in the pathway cofactor biosynthesis; pyridoxal 5'-phosphate biosynthesis. Its function is as follows. Catalyzes the hydrolysis of glutamine to glutamate and ammonia as part of the biosynthesis of pyridoxal 5'-phosphate. The resulting ammonia molecule is channeled to the active site of PdxS. This is Pyridoxal 5'-phosphate synthase subunit PdxT from Bifidobacterium longum (strain NCC 2705).